A 198-amino-acid polypeptide reads, in one-letter code: Imidazole glycerol phosphate synthase subunit HisH (198 aa).

The Glutamine amidotransferase type-1 domain occupies 1–194; the sequence is MIAIIDYGLG…LKGGFQDDQT (194 aa). The active-site Nucleophile is the Cys77. Active-site residues include His169 and Glu171.

Heterodimer of HisH and HisF.

It is found in the cytoplasm. The catalysed reaction is 5-[(5-phospho-1-deoxy-D-ribulos-1-ylimino)methylamino]-1-(5-phospho-beta-D-ribosyl)imidazole-4-carboxamide + L-glutamine = D-erythro-1-(imidazol-4-yl)glycerol 3-phosphate + 5-amino-1-(5-phospho-beta-D-ribosyl)imidazole-4-carboxamide + L-glutamate + H(+). It catalyses the reaction L-glutamine + H2O = L-glutamate + NH4(+). It participates in amino-acid biosynthesis; L-histidine biosynthesis; L-histidine from 5-phospho-alpha-D-ribose 1-diphosphate: step 5/9. Functionally, IGPS catalyzes the conversion of PRFAR and glutamine to IGP, AICAR and glutamate. The HisH subunit catalyzes the hydrolysis of glutamine to glutamate and ammonia as part of the synthesis of IGP and AICAR. The resulting ammonia molecule is channeled to the active site of HisF. The chain is Imidazole glycerol phosphate synthase subunit HisH from Staphylococcus saprophyticus subsp. saprophyticus (strain ATCC 15305 / DSM 20229 / NCIMB 8711 / NCTC 7292 / S-41).